The primary structure comprises 97 residues: Integration host factor subunit alpha (97 aa).

This sequence belongs to the bacterial histone-like protein family. In terms of assembly, heterodimer of an alpha and a beta chain.

In terms of biological role, this protein is one of the two subunits of integration host factor, a specific DNA-binding protein that functions in genetic recombination as well as in transcriptional and translational control. In Histophilus somni (strain 2336) (Haemophilus somnus), this protein is Integration host factor subunit alpha.